A 224-amino-acid polypeptide reads, in one-letter code: Ribose-5-phosphate isomerase A (224 aa).

Substrate-binding positions include 26 to 29 (TGST), 82 to 85 (DGAD), and 95 to 98 (KGGG). The active-site Proton acceptor is the glutamate 104. Residue lysine 122 participates in substrate binding.

It belongs to the ribose 5-phosphate isomerase family. As to quaternary structure, homodimer.

The catalysed reaction is aldehydo-D-ribose 5-phosphate = D-ribulose 5-phosphate. Its pathway is carbohydrate degradation; pentose phosphate pathway; D-ribose 5-phosphate from D-ribulose 5-phosphate (non-oxidative stage): step 1/1. Its function is as follows. Catalyzes the reversible conversion of ribose-5-phosphate to ribulose 5-phosphate. The sequence is that of Ribose-5-phosphate isomerase A from Lactococcus lactis subsp. cremoris (strain SK11).